The following is a 100-amino-acid chain: Co-chaperonin GroES (100 aa).

This sequence belongs to the GroES chaperonin family. As to quaternary structure, heptamer of 7 subunits arranged in a ring. Interacts with the chaperonin GroEL.

The protein localises to the cytoplasm. In terms of biological role, together with the chaperonin GroEL, plays an essential role in assisting protein folding. The GroEL-GroES system forms a nano-cage that allows encapsulation of the non-native substrate proteins and provides a physical environment optimized to promote and accelerate protein folding. GroES binds to the apical surface of the GroEL ring, thereby capping the opening of the GroEL channel. The polypeptide is Co-chaperonin GroES (Rhodothermus marinus (Rhodothermus obamensis)).